The sequence spans 459 residues: Cysteine--tRNA ligase (459 aa).

Cysteine 27 is a binding site for Zn(2+). Residues 29-39 (VTVYDDCHIGH) carry the 'HIGH' region motif. The Zn(2+) site is built by cysteine 208, histidine 233, and glutamate 237. A 'KMSKS' region motif is present at residues 265–269 (KMSKS). Residue lysine 268 participates in ATP binding.

The protein belongs to the class-I aminoacyl-tRNA synthetase family. As to quaternary structure, monomer. The cofactor is Zn(2+).

The protein resides in the cytoplasm. It carries out the reaction tRNA(Cys) + L-cysteine + ATP = L-cysteinyl-tRNA(Cys) + AMP + diphosphate. The protein is Cysteine--tRNA ligase of Francisella tularensis subsp. mediasiatica (strain FSC147).